We begin with the raw amino-acid sequence, 263 residues long: Glutamate 5-kinase (263 aa).

K14 is an ATP binding site. Substrate is bound by residues S52, D137, and N149. Residues 169 to 170 and 211 to 217 each bind ATP; these read SD and TGGIVTK.

The protein belongs to the glutamate 5-kinase family. As to quaternary structure, homotetramer; oligomerization is not affected by L-proline feedback inhibition. It depends on Mg(2+) as a cofactor.

It carries out the reaction L-glutamate + ATP = L-glutamyl 5-phosphate + ADP. It functions in the pathway amino-acid biosynthesis; L-proline biosynthesis; L-glutamate 5-semialdehyde from L-glutamate: step 1/2. With respect to regulation, inhibited by L-proline as part of a negative feedback loop. Also inhibited by L-proline analogs 3,4-dehydro-L-proline, L-azetidine-2-carboxylic acid and L-4-thiazolidine carboxylic acid. Catalyzes the transfer of a phosphate group to glutamate to form L-glutamate 5-phosphate. May be important for growth and survival. This Leishmania donovani protein is Glutamate 5-kinase.